The following is a 474-amino-acid chain: Bifunctional protein HldE (474 aa).

The segment at 1 to 318 (MKMTLPDFHC…ENAIRGRAET (318 aa)) is ribokinase. 195–198 (NLSE) lines the ATP pocket. Aspartate 264 is an active-site residue. The tract at residues 344 to 474 (MTNGCFDILH…TNIIKAIKNQ (131 aa)) is cytidylyltransferase.

In the N-terminal section; belongs to the carbohydrate kinase PfkB family. It in the C-terminal section; belongs to the cytidylyltransferase family. In terms of assembly, homodimer.

It catalyses the reaction D-glycero-beta-D-manno-heptose 7-phosphate + ATP = D-glycero-beta-D-manno-heptose 1,7-bisphosphate + ADP + H(+). It carries out the reaction D-glycero-beta-D-manno-heptose 1-phosphate + ATP + H(+) = ADP-D-glycero-beta-D-manno-heptose + diphosphate. It functions in the pathway nucleotide-sugar biosynthesis; ADP-L-glycero-beta-D-manno-heptose biosynthesis; ADP-L-glycero-beta-D-manno-heptose from D-glycero-beta-D-manno-heptose 7-phosphate: step 1/4. It participates in nucleotide-sugar biosynthesis; ADP-L-glycero-beta-D-manno-heptose biosynthesis; ADP-L-glycero-beta-D-manno-heptose from D-glycero-beta-D-manno-heptose 7-phosphate: step 3/4. The protein operates within bacterial outer membrane biogenesis; LPS core biosynthesis. Its function is as follows. Catalyzes the phosphorylation of D-glycero-D-manno-heptose 7-phosphate at the C-1 position to selectively form D-glycero-beta-D-manno-heptose-1,7-bisphosphate. In terms of biological role, catalyzes the ADP transfer from ATP to D-glycero-beta-D-manno-heptose 1-phosphate, yielding ADP-D-glycero-beta-D-manno-heptose. The chain is Bifunctional protein HldE from Photorhabdus laumondii subsp. laumondii (strain DSM 15139 / CIP 105565 / TT01) (Photorhabdus luminescens subsp. laumondii).